The primary structure comprises 842 residues: MVAFTIEQIRDLMDKVANVRNMSVIAHVDHGKSTLTDSLVQRAGIISAGKAGEARFMDTRKDEQERGITIKSTAISLYASMDDDDVKEIKQKTDGNSFLINLIDSPGHVDFSSEVTAALRVTDGALVVVDTVEGVCVQTETVLRQALGERIKPVLVVNKVDRALLELQVSKEDLYQTFARTVESVNVIISTYVDPALGDAQVYPDKGTVAFGSGLHGWAFTVRQFALRYSKKFGVDRAKMMERLWGDSFFNPKTKKWTNKDKDADGKPLERAFNMFVLDPIFRLFAAIMNFKKDEIPTLLEKLEINLKNEEKELEGKALLKVVMRKFLPAADALLEMIVLHLPSPVTAQAYRAETLYEGPSDDEFCTAIRNCDPKADLMLYVSKMVPTSDKGRFYAFGRVFAGTVKAGQKIRIQGPNYTPGKKEDLFLKSIQRTVLMMGRNTEAIDDCPAGNIVGLVGVDQFLLKSGTITTNEAAHNMKVMKFSVSPVVEVAVEVKNANDLPKLVEGLKRLSKSDPCVKTYMSESGEHIVAGTGELHLEICLSDLQNDHAGIPLRISDPVVAYRETIQAESSMVALSKSPNKHNRIYVKAQPIDEEVSLDIENGIINPRDDFKARARILADKHGWDVAEARKIWCFGPDGNGPNLVVDQTKAVQYLNEIKDSVVAAFQWATKEGPIFGENVRSVRVNILDVTLHADAIHRGGGQIIPTMRRVTYASMLLAEPAIQEPVFLVEIQCPENAIGGIYSVLNKKRGQVVSEEQRPGTPLFTVKAYLPVNESFGFSGDLRQATGGQAFPQLVFDHWAVLSGDVTDPTSKPGIIAKAKRERQGLKPEVPGYEEYYDKL.

The tr-type G domain maps to 17 to 346; it reads ANVRNMSVIA…MIVLHLPSPV (330 aa). GTP contacts are provided by residues 26 to 33, 158 to 161, and 213 to 215; these read AHVDHGKS, NKVD, and SGL. The residue at position 699 (H699) is a Diphthamide.

The protein belongs to the TRAFAC class translation factor GTPase superfamily. Classic translation factor GTPase family. EF-G/EF-2 subfamily.

It localises to the cytoplasm. It carries out the reaction GTP + H2O = GDP + phosphate + H(+). Its pathway is protein biosynthesis; polypeptide chain elongation. Functionally, catalyzes the GTP-dependent ribosomal translocation step during translation elongation. During this step, the ribosome changes from the pre-translocational (PRE) to the post-translocational (POST) state as the newly formed A-site-bound peptidyl-tRNA and P-site-bound deacylated tRNA move to the P and E sites, respectively. Catalyzes the coordinated movement of the two tRNA molecules, the mRNA and conformational changes in the ribosome. The chain is Elongation factor 2 (EFT2) from Meyerozyma guilliermondii (strain ATCC 6260 / CBS 566 / DSM 6381 / JCM 1539 / NBRC 10279 / NRRL Y-324) (Yeast).